Here is a 178-residue protein sequence, read N- to C-terminus: CDP-archaeol synthase (178 aa).

Transmembrane regions (helical) follow at residues 3–23 (LLLLLFSAIWYILPAYVANAV), 56–76 (FFGILFGIITGILQHFIVILY), 91–111 (IILGFLLGTGALFGDMLGSFI), 123–143 (APLLDQMTFIVFALIFAYPLY), and 149–169 (LMVILLVISPIIHFSSNIIAY).

Belongs to the CDP-archaeol synthase family. The cofactor is Mg(2+).

It is found in the cell membrane. The catalysed reaction is 2,3-bis-O-(geranylgeranyl)-sn-glycerol 1-phosphate + CTP + H(+) = CDP-2,3-bis-O-(geranylgeranyl)-sn-glycerol + diphosphate. It participates in membrane lipid metabolism; glycerophospholipid metabolism. In terms of biological role, catalyzes the formation of CDP-2,3-bis-(O-geranylgeranyl)-sn-glycerol (CDP-archaeol) from 2,3-bis-(O-geranylgeranyl)-sn-glycerol 1-phosphate (DGGGP) and CTP. This reaction is the third ether-bond-formation step in the biosynthesis of archaeal membrane lipids. This Methanococcus maripaludis (strain C7 / ATCC BAA-1331) protein is CDP-archaeol synthase.